Reading from the N-terminus, the 407-residue chain is Na(+)-translocating NADH-quinone reductase subunit F (407 aa).

The helical transmembrane segment at 3–23 (IILGVVMFTLIVLALTVMILF) threads the bilayer. The 2Fe-2S ferredoxin-type domain maps to 32 to 126 (GDITIDINED…NLKIELPEEI (95 aa)). The [2Fe-2S] cluster site is built by Cys-69, Cys-75, Cys-78, and Cys-110. Positions 129–269 (VKKWECEVIS…SGPFGEFFAK (141 aa)) constitute an FAD-binding FR-type domain.

It belongs to the NqrF family. In terms of assembly, composed of six subunits; NqrA, NqrB, NqrC, NqrD, NqrE and NqrF. The cofactor is [2Fe-2S] cluster. Requires FAD as cofactor.

Its subcellular location is the cell inner membrane. The enzyme catalyses a ubiquinone + n Na(+)(in) + NADH + H(+) = a ubiquinol + n Na(+)(out) + NAD(+). Its function is as follows. NQR complex catalyzes the reduction of ubiquinone-1 to ubiquinol by two successive reactions, coupled with the transport of Na(+) ions from the cytoplasm to the periplasm. The first step is catalyzed by NqrF, which accepts electrons from NADH and reduces ubiquinone-1 to ubisemiquinone by a one-electron transfer pathway. The sequence is that of Na(+)-translocating NADH-quinone reductase subunit F from Yersinia enterocolitica serotype O:8 / biotype 1B (strain NCTC 13174 / 8081).